We begin with the raw amino-acid sequence, 482 residues long: MFS-type transporter cnsL (482 aa).

The chain crosses the membrane as a helical span at residues 73–93 (LFVCATLSGLDKTAISAAAVY). The N-linked (GlcNAc...) asparagine glycan is linked to Asn-100. A run of 9 helical transmembrane segments spans residues 108–128 (WIGSAPFFGGLLFMGPLAYCL), 131–151 (VPAVPFFAFNVLCWGILEMSV), 170–190 (IILNVVAPIINGFVAWVVGYY), 199–219 (IIFLLVGALTIVTSVVVYFVL), 304–324 (LLAMPPGAMSTLSGIGLSYLA), 333–353 (AIVTVSILLPLFGAVLCYALP), 361–381 (LVGLYILYTYWAPYVTLVSVY), 392–412 (ITLYAWFYIAWATGNIIGPQT), and 426–446 (VAMIICYVVAMFAITAYGVVC).

This sequence belongs to the major facilitator superfamily. Allantoate permease family.

It localises to the cell membrane. MFS-type transporter; part of the gene cluster that mediates the biosynthesis of communesins, a prominent class of indole alkaloids with great potential as pharmaceuticals. With the MFS transporter cnsO, is most likely responsible for cummunesins secretion and thereby may contribute to intrinsic resistance. This Penicillium expansum (Blue mold rot fungus) protein is MFS-type transporter cnsL.